Consider the following 89-residue polypeptide: Large ribosomal subunit protein eL43 (89 aa).

Positions 38, 41, 56, and 59 each coordinate Zn(2+). The segment at cysteine 38–cysteine 59 adopts a C4-type zinc-finger fold.

The protein belongs to the eukaryotic ribosomal protein eL43 family. Putative zinc-binding subfamily. Part of the 50S ribosomal subunit. Requires Zn(2+) as cofactor.

Functionally, binds to the 23S rRNA. The chain is Large ribosomal subunit protein eL43 from Methanothermobacter thermautotrophicus (strain ATCC 29096 / DSM 1053 / JCM 10044 / NBRC 100330 / Delta H) (Methanobacterium thermoautotrophicum).